A 186-amino-acid polypeptide reads, in one-letter code: Hydra actinoporin-like toxin 1 (186 aa).

The N-terminal stretch at M1–A18 is a signal peptide. The interval K29–V48 is N-terminal region. The short motif at R158–G160 is the Cell attachment site, crucial for protein stability element.

It belongs to the actinoporin family. HALT subfamily. In terms of assembly, octamer or nonamer in membranes. Monomer in the soluble state. In vitro, interacts with folate receptor alpha (of target organism). As to expression, expressed female germline during oogenesis.

Its subcellular location is the nematocyst. The protein resides in the secreted. It localises to the target cell membrane. Functionally, pore-forming protein that forms hydrophilic pores and causes cytolysis. Compared to equinatoxin-2 (AC P61914), it reveals lower cytolysis activity (5-12-fold difference, tested on erythrocytes), a larger pore size (probably 2-3 nm) and different affinity to membrane lipids (100-fold lower affinity to sphingomyelin). Binds to sulfatides (SFT) as well as to the two sphingolipids, lysophosphatidic acid (LPA) and sphingosine-1-phosphate (S1P). It seems to bind more strongly to LPA than to S1P and SFT. Shows cytolytic activity on HeLa cells, with a different potency than its paralogs (from most potent to less potent: HALT-4&gt;HALT-6~HALT-1&gt;HALT-3&gt;HALT-7&gt;HALT-2). Pore formation is a multi-step process that involves specific recognition of membrane lipid by a protein aromatic residues rich region, firm binding to the membrane (mainly driven by hydrophobic interactions) accompanied by the transfer of the N-terminal region to the lipid-water interface and finally pore formation after oligomerization of monomers. In vitro, binds to the folate receptor alpha (FOLR1), a GPI-anchored membrane protein that plays a major role in the uptake of folate/folic acid into cells via endocytosis, suggesting a possible involvement of this receptor in the mechanism of HALT-1-induced cell lysis. In vivo, does not cause visible paralysis in larvae of the blowfly Sarcophaga faculata, the most common arthropod prey of Hydra. The protein is Hydra actinoporin-like toxin 1 of Hydra vulgaris (Hydra).